The chain runs to 238 residues: tRNA1(Val) (adenine(37)-N6)-methyltransferase (238 aa).

It belongs to the methyltransferase superfamily. tRNA (adenine-N(6)-)-methyltransferase family.

Its subcellular location is the cytoplasm. The catalysed reaction is adenosine(37) in tRNA1(Val) + S-adenosyl-L-methionine = N(6)-methyladenosine(37) in tRNA1(Val) + S-adenosyl-L-homocysteine + H(+). Specifically methylates the adenine in position 37 of tRNA(1)(Val) (anticodon cmo5UAC). The protein is tRNA1(Val) (adenine(37)-N6)-methyltransferase of Shewanella putrefaciens (strain CN-32 / ATCC BAA-453).